A 382-amino-acid polypeptide reads, in one-letter code: Na(+)/H(+) antiporter NhaA (382 aa).

A run of 10 helical transmembrane segments spans residues 11–31, 47–67, 88–108, 116–136, 145–165, 170–190, 261–283, 299–319, 327–347, and 353–373; these read FSVP…LDPA, FHFV…AVEI, LATL…NAII, GWGI…RLVF, FLLL…AVFY, HPTE…AYIL, IVVD…SSVG, LGIF…PQQV, TGLV…VAFV, and GSAK…IMLG.

The protein belongs to the NhaA Na(+)/H(+) (TC 2.A.33) antiporter family.

It localises to the cell inner membrane. The catalysed reaction is Na(+)(in) + 2 H(+)(out) = Na(+)(out) + 2 H(+)(in). Functionally, na(+)/H(+) antiporter that extrudes sodium in exchange for external protons. The sequence is that of Na(+)/H(+) antiporter NhaA from Geobacter sulfurreducens (strain ATCC 51573 / DSM 12127 / PCA).